A 507-amino-acid chain; its full sequence is Proton-coupled zinc antiporter SLC30A1 (507 aa).

Residues methionine 1–arginine 10 lie on the Cytoplasmic side of the membrane. A helical transmembrane segment spans residues leucine 11–valine 31. The Extracellular segment spans residues threonine 32 to leucine 35. The chain crosses the membrane as a helical span at residues alanine 36–valine 56. 2 residues coordinate Zn(2+): histidine 43 and aspartate 47. Over alanine 57–glutamate 78 the chain is Cytoplasmic. The helical transmembrane segment at valine 79–glutamate 99 threads the bilayer. The Extracellular segment spans residues alanine 100 to proline 113. A helical transmembrane segment spans residues leucine 114–phenylalanine 134. The Cytoplasmic portion of the chain corresponds to histidine 135–valine 247. The tract at residues glutamate 140 to aspartate 218 is disordered. The segment at glycine 145 to histidine 156 is 6 X 2 AA approximate repeats of H-G. Positions glycine 147–glycine 165 are enriched in basic residues. The segment covering threonine 188–glycine 200 has biased composition (polar residues). Residues aspartate 204–aspartate 215 show a composition bias toward basic and acidic residues. The chain crosses the membrane as a helical span at residues phenylalanine 248–phenylalanine 268. The Zn(2+) site is built by histidine 250 and aspartate 254. At tyrosine 269–alanine 307 the chain is on the extracellular side. Residue asparagine 298 is glycosylated (N-linked (GlcNAc...) asparagine). The chain crosses the membrane as a helical span at residues glycine 308–leucine 328. Residues tyrosine 329–leucine 507 are Cytoplasmic-facing. Serine 506 carries the phosphoserine modification.

Belongs to the cation diffusion facilitator (CDF) transporter (TC 2.A.4) family. SLC30A subfamily. In terms of assembly, homodimer. Interacts with TMEM163. Interacts and forms a complex with TMC6 and TMC8; the interaction regulates zinc transport into the ER. As to expression, widely expressed. Detected in duodenum and jejunum but not in ileum and colon (at protein level). Expressed by neuroglial cells (at protein level).

The protein localises to the cell membrane. It is found in the basolateral cell membrane. The protein resides in the cytoplasmic vesicle membrane. It localises to the cytoplasm. Its subcellular location is the endoplasmic reticulum membrane. The protein localises to the golgi apparatus membrane. It is found in the nucleus membrane. It catalyses the reaction Zn(2+)(in) + 2 H(+)(out) = Zn(2+)(out) + 2 H(+)(in). Calcium-dependent. Its function is as follows. Zinc ion:proton antiporter that could function at the plasma membrane mediating zinc efflux from cells against its electrochemical gradient protecting them from intracellular zinc accumulation and toxicity. Alternatively, could prevent the transport to the plasma membrane of CACNB2, the L-type calcium channels regulatory subunit, through a yet to be defined mechanism. By modulating the expression of these channels at the plasma membrane, could prevent calcium and zinc influx into cells. By the same mechanism, could also prevent L-type calcium channels-mediated heavy metal influx into cells. In some cells, could also function as a zinc ion:proton antiporter mediating zinc entry into the lumen of cytoplasmic vesicles. In macrophages, can increase zinc ions concentration into the lumen of cytoplasmic vesicles containing engulfed bacteria and could help inactivate them. Forms a complex with TMC6/EVER1 and TMC8/EVER2 at the ER membrane of keratynocytes which facilitates zinc uptake into the ER. Down-regulates the activity of transcription factors induced by zinc and cytokines. This chain is Proton-coupled zinc antiporter SLC30A1, found in Rattus norvegicus (Rat).